A 415-amino-acid chain; its full sequence is MAIQAQKGTKDMLPNDAYKWHYIEEKLRKISAEYGIREIRTPMFEATELFKRGVGETTDVVQKEMYTFEDKGGRSITLKPEGTAPAVRAFIENSLYADAQPTKMFYFTPCFRYEKMQKGRLREFHQYGIEVFGSQEASIDAEILSLVMRALTEDFGIKGLSLNINSLGCPKCRAKFNEALKQYLKENYDNLCETCKTRFEKNPMRIIDCKEKRCKEIVKEAPSILDYICEECSDHFSKLKAYLDVMGIEYNIDPQIVRGLDYYSKTVFEVIKDGLTVCGGGRYDYLVEEVDGPKTPAMGFGLGLERLLLILDEEGIEIPEPVRCEVYIGSMGDNAKLEAMKLAFNLRKAGIKAEIDHLGKSVKAQMKYANKIGAKYTFVIGDSEIEENKIKIKRMSDGEQFEVSLDINEIVNIVK.

Belongs to the class-II aminoacyl-tRNA synthetase family. Homodimer.

It is found in the cytoplasm. The enzyme catalyses tRNA(His) + L-histidine + ATP = L-histidyl-tRNA(His) + AMP + diphosphate + H(+). This chain is Histidine--tRNA ligase, found in Clostridium perfringens (strain ATCC 13124 / DSM 756 / JCM 1290 / NCIMB 6125 / NCTC 8237 / Type A).